The following is a 360-amino-acid chain: Chorismate synthase (360 aa).

Residue arginine 48 coordinates NADP(+). Residues 125–127 (RSS), 242–243 (NA), glycine 286, 301–305 (KPTSS), and arginine 327 each bind FMN.

This sequence belongs to the chorismate synthase family. As to quaternary structure, homotetramer. The cofactor is FMNH2.

The enzyme catalyses 5-O-(1-carboxyvinyl)-3-phosphoshikimate = chorismate + phosphate. The protein operates within metabolic intermediate biosynthesis; chorismate biosynthesis; chorismate from D-erythrose 4-phosphate and phosphoenolpyruvate: step 7/7. Catalyzes the anti-1,4-elimination of the C-3 phosphate and the C-6 proR hydrogen from 5-enolpyruvylshikimate-3-phosphate (EPSP) to yield chorismate, which is the branch point compound that serves as the starting substrate for the three terminal pathways of aromatic amino acid biosynthesis. This reaction introduces a second double bond into the aromatic ring system. This Pelagibacter ubique (strain HTCC1062) protein is Chorismate synthase.